The sequence spans 1116 residues: DUB-associated factor 1 (1116 aa).

WD repeat units lie at residues 21-62, 91-132, 160-200, 219-262, 266-305, 387-426, and 428-466; these read AHIL…NEPE, KNSD…DHDD, VHDG…EKMA, SMSP…EVIR, AHRT…DQTT, KKYG…FSVN, and GGFA…LLNT. Positions 578–600 are disordered; that stretch reads LDTGYNSESKKNNKDKKRKSTFK. The residue at position 668 (S668) is a Phosphoserine. The residue at position 693 (T693) is a Phosphothreonine. Residues 747–776 are compositionally biased toward polar residues; that stretch reads ISSQDLPSNNTHNKLRSSENSRANSTSTLE. 2 disordered regions span residues 747–784 and 963–994; these read ISSQ…KKPE and FISA…PSTQ. The span at 967–987 shows a compositional bias: low complexity; sequence SDTTESSGNDSSDSSLGNGNE.

Interacts (via its WD repeats) with ubiquitin.

The protein resides in the cytoplasm. In terms of biological role, ubiquitin-binding protein involved in the resistance to phenanthroline, sanguinarine, nordihydroguaiaretic acid (NDGA), isopropyl (N-3-chloro-phenyl)-carbamate (IPCPC) and guanosine 5'-O-(2-thiodiphosphate). The sequence is that of DUB-associated factor 1 from Saccharomyces cerevisiae (strain ATCC 204508 / S288c) (Baker's yeast).